Here is a 2119-residue protein sequence, read N- to C-terminus: Outer kinetochore KNL1 complex subunit KNL1 (2119 aa).

The disordered stretch occupies residues methionine 1 to valine 59. The interval methionine 1–threonine 202 is may mediate oligomerization. 2 interaction with microtubules regions span residues arginine 17 to leucine 34 and arginine 53 to serine 80. The interval histidine 23–serine 80 is interaction with PP1CA; contains the protein phosphatase 1 (PP1) interaction motifs SILK, RVXF and phi-phi. Serine 24, serine 32, and serine 60 each carry phosphoserine. Residues glutamate 124 to glycine 140 form an interaction with BUB1 region. The interaction with BUB1B stretch occupies residues glutamate 160 to threonine 179. Serine 538 is modified (phosphoserine). Threonine 540 and threonine 739 each carry phosphothreonine. Residues aspartate 723–aspartate 827 form repeat 1. The tract at residues aspartate 723–aspartate 1027 is 2 X 104 AA approximate repeats. A phosphoserine mark is found at serine 794 and serine 878. Copy 2 of the repeat occupies lysine 923 to aspartate 1027. Residues serine 1243 and serine 1464 each carry the phosphoserine modification. Positions serine 1557–aspartate 1583 are disordered. The span at asparagine 1566–aspartate 1583 shows a compositional bias: basic and acidic residues. Positions threonine 1577–isoleucine 1590 match the Nuclear localization signal motif. 3 positions are modified to phosphoserine: serine 1616, serine 1627, and serine 1642. Positions lysine 1763–glutamine 1890 are required for interaction with ZWINT. Residues valine 1799 to glutamine 1890 adopt a coiled-coil conformation. The interaction with NSL1, DSN1 and required for assembly into the outer kinetochore stretch occupies residues glutamate 1873–alanine 2093.

Component of the KNL1 complex composed of KNL1 and ZWINT. Part of the ten-subunit outer kinetochore KMN network that includes the KNL1, MIS12 and NDC80 complexes; a bioriented kinetochore contains approximately 150 copies of the network. Interacts (via C-terminus) with the MIS12 complex subunits NSL1 (via C-terminus), PMF1 and DSN1; the interaction is direct. Interacts (via N-terminal region) with BUB1B (via BUB1 N-terminal domain); the interaction is direct and is required for cell cycle arrest upon activation of the mitotic spindle assembly checkpoint. Interacts (via N-terminal region) with BUB1 (via BUB1 N-terminal domain); the interaction is direct. Interacts with the protein phosphatase PP1 subunit PPP1CA; the interaction is direct and mutually exclusive with binding to microtubules. Interacts with the protein phosphatase PP1 subunit PPP1CC; the interaction is direct and mutually exclusive with binding to microtubules. In terms of processing, phosphorylation by AURKB negatively regulates its interaction with protein phosphatase 1 (PP1) subunit PPP1CA and with microtubules. Expressed in oocytes during meiotic progression (at protein level). Expressed during spermatogenesis.

It is found in the nucleus. The protein localises to the chromosome. Its subcellular location is the centromere. The protein resides in the kinetochore. It localises to the cytoplasm. Its function is as follows. Acts as a component of the outer kinetochore KNL1 complex that serves as a docking point for spindle assembly checkpoint components and mediates microtubule-kinetochore interactions. Kinetochores, consisting of a centromere-associated inner segment and a microtubule-contacting outer segment, play a crucial role in chromosome segregation by mediating the physical connection between centromeric DNA and spindle microtubules. The outer kinetochore is made up of the ten-subunit KMN network, comprising the MIS12, NDC80 and KNL1 complexes, and auxiliary microtubule-associated components; together they connect the outer kinetochore with the inner kinetochore, bind microtubules, and mediate interactions with mitotic checkpoint proteins that delay anaphase until chromosomes are bioriented on the spindle. Required for kinetochore binding by a distinct subset of kMAPs (kinetochore-bound microtubule-associated proteins) and motors. Acts in coordination with CENPK to recruit the NDC80 complex to the outer kinetochore. Can bind either to microtubules or to the protein phosphatase 1 (PP1) catalytic subunits PPP1CA and PPP1CC (via overlapping binding sites), it has higher affinity for PP1. Recruits MAD2L1 to the kinetochore and also directly links BUB1 and BUB1B to the kinetochore. In addition to orienting mitotic chromosomes, it is also essential for alignment of homologous chromosomes during meiotic metaphase I. In meiosis I, required to activate the spindle assembly checkpoint at unattached kinetochores to correct erroneous kinetochore-microtubule attachments. This is Outer kinetochore KNL1 complex subunit KNL1 from Mus musculus (Mouse).